Here is a 129-residue protein sequence, read N- to C-terminus: Large ribosomal subunit protein bL20 (129 aa).

Belongs to the bacterial ribosomal protein bL20 family.

Its function is as follows. Binds directly to 23S ribosomal RNA and is necessary for the in vitro assembly process of the 50S ribosomal subunit. It is not involved in the protein synthesizing functions of that subunit. This Mycobacterium tuberculosis (strain ATCC 25177 / H37Ra) protein is Large ribosomal subunit protein bL20.